Reading from the N-terminus, the 1108-residue chain is Isoleucine--tRNA ligase (1108 aa).

The 'HIGH' region motif lies at 53 to 63 (PFANGLPHYGH). A 'KMSKS' region motif is present at residues 654–658 (KLSKR). Position 657 (Lys-657) interacts with ATP.

The protein belongs to the class-I aminoacyl-tRNA synthetase family. IleS type 2 subfamily. In terms of assembly, monomer. The cofactor is Zn(2+).

Its subcellular location is the cytoplasm. It carries out the reaction tRNA(Ile) + L-isoleucine + ATP = L-isoleucyl-tRNA(Ile) + AMP + diphosphate. Functionally, catalyzes the attachment of isoleucine to tRNA(Ile). As IleRS can inadvertently accommodate and process structurally similar amino acids such as valine, to avoid such errors it has two additional distinct tRNA(Ile)-dependent editing activities. One activity is designated as 'pretransfer' editing and involves the hydrolysis of activated Val-AMP. The other activity is designated 'posttransfer' editing and involves deacylation of mischarged Val-tRNA(Ile). The polypeptide is Isoleucine--tRNA ligase (Rickettsia bellii (strain OSU 85-389)).